The primary structure comprises 215 residues: uncharacterized protein (215 aa).

The signal sequence occupies residues 1–17 (MKKVLASATILSLMLVG). The disordered stretch occupies residues 17-110 (GCSNGGNDES…NKQQQSVQDN (94 aa)). Cysteine 18 carries N-palmitoyl cysteine lipidation. Cysteine 18 is lipidated: S-diacylglycerol cysteine. Over residues 25-69 (ESSHKDDSSKTEQKDKSSSQHDSKKDSKRNDTNNKQDNQENKSNK) the composition is skewed to basic and acidic residues. Positions 70–95 (EQTSNQNSNAGEQRTSERPTTNSNGI) are enriched in polar residues. A compositionally biased stretch (low complexity) spans 96–110 (SSDNQNKQQQSVQDN).

The protein localises to the cell membrane. This is an uncharacterized protein from Staphylococcus epidermidis (strain ATCC 12228 / FDA PCI 1200).